We begin with the raw amino-acid sequence, 475 residues long: MGWNGGLTSPSMEEHFYPFLMERSPSYMGEDEEEHGDEDLSLVLERKDKDLLLAAELGKALLERNDQLMKAKDALEEELRETLEMIEQEKHNMRLKMEVQESEWRAQVADLESDLAEARLQMQQLLSEQRECGRESASAVQELSEQNQRLVEQLAQASQVEQAITLEMKSLKEENRDLTISRGQFAPCLQSLRSENALLLEKKKEMESQTKQLQEENDNVQNQLISAKEGVFQLQRQKEDAKSQVLQLELEAQKLRDSQRTLQLQLKELQDELHMRDSQFSMRGTHSSLHSEIQQSTAVQNHEKGRNSAETQSITSGYMDTYLTEREGDLLRENEEQTVRLQDQVTMQHIEITDLRKEVQRLKDLLQQNNADSTVKQAVLDRDEALMKKAELEQELARCQIEKESLNLQLLSTIQQKVMLSQELEAWQDDMQIVINQQLQSQKQQETQKPPESPQNSFLRRDSKRGKILSFFKNI.

Residues 56–275 (ELGKALLERN…LKELQDELHM (220 aa)) are a coiled coil. Composition is skewed to polar residues over residues 286–300 (HSSLHSEIQQSTAVQ) and 308–318 (SAETQSITSGY). A disordered region spans residues 286-318 (HSSLHSEIQQSTAVQNHEKGRNSAETQSITSGY). A coiled-coil region spans residues 340–413 (RLQDQVTMQH…ESLNLQLLST (74 aa)). Over residues 440–450 (QSQKQQETQKP) the composition is skewed to low complexity. The segment at 440–459 (QSQKQQETQKPPESPQNSFL) is disordered.

The protein belongs to the BICDR family.

This is BICD family-like cargo adapter 2 (bicdl2) from Xenopus tropicalis (Western clawed frog).